The sequence spans 463 residues: Hydrolase pyiE (463 aa).

S252 (nucleophile) is an active-site residue. The segment at 350–373 is disordered; it reads KSDGSRANGKKSHSPTDGGGVESD.

It belongs to the AB hydrolase superfamily. FUS2 hydrolase family. As to quaternary structure, homodimer.

Its pathway is mycotoxin biosynthesis. Functionally, hydrolyase; part of the gene cluster that mediates the biosynthesis of the mycotoxin pyrichalasin H, a tyrosine-derived cytochalasan that inhibits the growth of rice seedlings, but also inhibits lymphocyte capping and actin polymerization and alters cell morphology. Pyrichalasin H is indicated as the responsible agent for the genus-specific pathogenicity of M.grisea toward crabgrass. The first step in the pathway is catalyzed by the O-methyltransferase pyiA which methylates free tyrosine to generate the precursor O-methyltyrosine. The hybrid PKS-NRPS pyiS, assisted by the enoyl reductase pyiC, are responsible for fusion of the O-methyltyrosine precursor and the polyketide backbone. The polyketide synthase module (PKS) of pyiS is responsible for the synthesis of the polyketide backbone and the downstream nonribosomal peptide synthetase (NRPS) amidates the carboxyl end of the polyketide with the O-methyltyrosine precursor. As the NRPS A-domain demonstrates substrate tolerance, pyiS can also use phenylalanine, tyrosine and even para-chlorophenylalanine as amino acid precursor, which leads to the production of novel cytochalasans, including halogenated cytochalasans. Because pyiS lacks a designated enoylreductase (ER) domain, the required activity is provided the enoyl reductase pyiC. Reduction by the hydrolyase pyiE leads to 1,5-dihydropyrrolone, which is substrate for dehydration and intra-molecular Diels-Alder cyclization by the Diels-Alderase pyiF to yield the required isoindolone-fused macrocycle. The tailoring cytochrome P450 monooxygenases piyD and piyG catalyze the hydroxylation at C-18 and C-7, respectivily, whereas the short-chain dehydrogenase/reductase pyiH reduces the carbonyl at C-21 in preparation for the transfer of an acetyl group by the acetyltransferase pyiB. These 3 reactions whose order is not clear yet, lead to the production of O-methylpyrichalasin J, a deacetylated pyrichalasin H. Finally, pyiB to converts O-methylpyrichalasin J into the final product pyrichalasin H via acetylation of C-21. The polypeptide is Hydrolase pyiE (Pyricularia grisea (Crabgrass-specific blast fungus)).